The chain runs to 324 residues: tRNA N6-adenosine threonylcarbamoyltransferase (324 aa).

Positions 107, 111, and 127 each coordinate Fe cation. Substrate contacts are provided by residues 127 to 131 (YVSGG), aspartate 159, glycine 172, glutamate 176, and asparagine 257. Aspartate 285 contacts Fe cation.

Belongs to the KAE1 / TsaD family. In terms of assembly, monomer. Component of the KEOPS complex that consists of Kae1, Bud32, Cgi121 and Pcc1; the whole complex dimerizes. Requires Fe(2+) as cofactor.

Its subcellular location is the cytoplasm. It carries out the reaction L-threonylcarbamoyladenylate + adenosine(37) in tRNA = N(6)-L-threonylcarbamoyladenosine(37) in tRNA + AMP + H(+). Functionally, required for the formation of a threonylcarbamoyl group on adenosine at position 37 (t(6)A37) in tRNAs that read codons beginning with adenine. Is a component of the KEOPS complex that is probably involved in the transfer of the threonylcarbamoyl moiety of threonylcarbamoyl-AMP (TC-AMP) to the N6 group of A37. Kae1 likely plays a direct catalytic role in this reaction, but requires other protein(s) of the complex to fulfill this activity. In vitro, binds tRNA, ssRNA, both single- and double-stranded DNA, and exhibits a low ATPase activity. This is tRNA N6-adenosine threonylcarbamoyltransferase from Pyrococcus abyssi (strain GE5 / Orsay).